The chain runs to 609 residues: Replication factor A protein 1 (609 aa).

Over residues 130 to 152 (QNEQNNASAPRTGISTSTNSFYG) the composition is skewed to polar residues. The disordered stretch occupies residues 130 to 166 (QNEQNNASAPRTGISTSTNSFYGNNAAATAPAPPPMM). A DNA-binding region (OB) is located at residues 192–278 (WTIRARVTNK…NEYELMFERD (87 aa)). The C4-type zinc finger occupies 477-498 (CPAADCNKKVFDQGGSWRCEKC).

Belongs to the replication factor A protein 1 family. Component of the heterotrimeric canonical replication protein A complex (RPA).

The protein localises to the nucleus. Its function is as follows. As part of the replication protein A (RPA/RP-A), a single-stranded DNA-binding heterotrimeric complex, may play an essential role in DNA replication, recombination and repair. Binds and stabilizes single-stranded DNA intermediates, preventing complementary DNA reannealing and recruiting different proteins involved in DNA metabolism. The sequence is that of Replication factor A protein 1 (ssb1) from Schizosaccharomyces pombe (strain 972 / ATCC 24843) (Fission yeast).